The sequence spans 218 residues: Probable GTP-binding protein EngB (218 aa).

In terms of domain architecture, EngB-type G spans 31 to 205; that stretch reads SGIEIAFAGR…EQKVTSWYAQ (175 aa). GTP is bound by residues 39–46, 66–70, 84–87, 151–154, and 184–186; these read GRSNAGKS, GRTQL, DLPG, TKAD, and FSS. Residues Ser46 and Thr68 each contribute to the Mg(2+) site.

It belongs to the TRAFAC class TrmE-Era-EngA-EngB-Septin-like GTPase superfamily. EngB GTPase family. Requires Mg(2+) as cofactor.

Functionally, necessary for normal cell division and for the maintenance of normal septation. The polypeptide is Probable GTP-binding protein EngB (Psychromonas ingrahamii (strain DSM 17664 / CCUG 51855 / 37)).